A 274-amino-acid polypeptide reads, in one-letter code: Large ribosomal subunit protein uL2cz/uL2cy (274 aa).

2 disordered regions span residues 1-25 (MAIHLYKTSTPSTRNGAVDSQVKSN) and 223-274 (MNPV…RRTK).

This sequence belongs to the universal ribosomal protein uL2 family. Part of the 50S ribosomal subunit.

It localises to the plastid. Its subcellular location is the chloroplast. This chain is Large ribosomal subunit protein uL2cz/uL2cy (rpl2-A), found in Citrus sinensis (Sweet orange).